We begin with the raw amino-acid sequence, 500 residues long: Plexin domain-containing protein 1 (500 aa).

The first 18 residues, 1–18 (MRGELWLLVLVLREAARA), serve as a signal peptide directing secretion. Residues 19–426 (LSPQPGAGHD…TKGTPVHLGT (408 aa)) lie on the Extracellular side of the membrane. Disordered stretches follow at residues 20–39 (SPQP…AAKG) and 46–78 (RRAR…DTLP). A glycan (O-linked (Xyl...) (chondroitin sulfate) serine) is linked at serine 33. The span at 47-60 (RARESPGHVSEPDR) shows a compositional bias: basic and acidic residues. Residues asparagine 80 and asparagine 197 are each glycosylated (N-linked (GlcNAc...) asparagine). Residues 359-379 (FQDEDHDSASPDTSFSPYDGD) form a disordered region. A compositionally biased stretch (polar residues) spans 368-379 (SPDTSFSPYDGD). Residues 427-447 (IVGIVLAVLLVAAIILAGIYI) form a helical membrane-spanning segment. Topologically, residues 448 to 500 (NGHPTSNAALFFIERRPHHWPAMKFRSHPDHSTYAEVEPSGHEKEGFMEAEQC) are cytoplasmic. A compositionally biased stretch (basic and acidic residues) spans 479 to 494 (STYAEVEPSGHEKEGF). The disordered stretch occupies residues 479-500 (STYAEVEPSGHEKEGFMEAEQC).

It belongs to the plexin family. Interacts with NID1. May interact with CTTN. Post-translationally, N-glycosylated. In terms of tissue distribution, detected in urine (at protein level). Detected in endothelial cells from colorectal cancer, and in endothelial cells from primary cancers of the lung, liver, pancreas, breast and brain. Not detectable in endothelial cells from normal tissue. Expressed in fibrovascular membrane with increased expression in individuals with proliferative diabetic retinopathy.

It localises to the secreted. The protein localises to the cell membrane. The protein resides in the cell junction. Its subcellular location is the tight junction. It is found in the cytoplasm. Its function is as follows. Plays a critical role in endothelial cell capillary morphogenesis. This is Plexin domain-containing protein 1 (PLXDC1) from Homo sapiens (Human).